A 448-amino-acid chain; its full sequence is Histidinol dehydrogenase (448 aa).

NAD(+)-binding residues include Tyr136, Gln197, and Asn220. Positions 243, 265, and 268 each coordinate substrate. Positions 265 and 268 each coordinate Zn(2+). Catalysis depends on proton acceptor residues Glu333 and His334. The substrate site is built by His334, Asp367, Glu421, and His426. Asp367 contributes to the Zn(2+) binding site. His426 is a binding site for Zn(2+).

The protein belongs to the histidinol dehydrogenase family. Requires Zn(2+) as cofactor.

It catalyses the reaction L-histidinol + 2 NAD(+) + H2O = L-histidine + 2 NADH + 3 H(+). The protein operates within amino-acid biosynthesis; L-histidine biosynthesis; L-histidine from 5-phospho-alpha-D-ribose 1-diphosphate: step 9/9. In terms of biological role, catalyzes the sequential NAD-dependent oxidations of L-histidinol to L-histidinaldehyde and then to L-histidine. This Pseudomonas syringae pv. tomato (strain ATCC BAA-871 / DC3000) protein is Histidinol dehydrogenase.